Here is a 213-residue protein sequence, read N- to C-terminus: Orotate phosphoribosyltransferase (213 aa).

Lys26 is a binding site for 5-phospho-alpha-D-ribose 1-diphosphate. 34-35 contributes to the orotate binding site; that stretch reads FF. Residues 72-73, Arg99, Lys100, Lys103, His105, and 124-132 each bind 5-phospho-alpha-D-ribose 1-diphosphate; these read YK and DDVITAGTA. The orotate site is built by Thr128 and Arg156.

Belongs to the purine/pyrimidine phosphoribosyltransferase family. PyrE subfamily. As to quaternary structure, homodimer. The cofactor is Mg(2+).

The catalysed reaction is orotidine 5'-phosphate + diphosphate = orotate + 5-phospho-alpha-D-ribose 1-diphosphate. It participates in pyrimidine metabolism; UMP biosynthesis via de novo pathway; UMP from orotate: step 1/2. In terms of biological role, catalyzes the transfer of a ribosyl phosphate group from 5-phosphoribose 1-diphosphate to orotate, leading to the formation of orotidine monophosphate (OMP). The protein is Orotate phosphoribosyltransferase of Escherichia coli O45:K1 (strain S88 / ExPEC).